The following is a 47-amino-acid chain: Ruminococcin-A (47 aa).

The signal sequence occupies residues 1 to 23 (MRNDVLTLTNPMEENELEQILGG). T30 and T39 each carry 2,3-didehydrobutyrine. The segment at residues 30–35 (TISHEC) is a cross-link (beta-methyllanthionine (Thr-Cys)). The segment at residues 32–46 (SHECNMNTWQFLFTC) is a cross-link (lanthionine (Ser-Cys)). Positions 45-47 (TCC) form a cross-link, beta-methyllanthionine (Thr-Cys).

The protein belongs to the type A lantibiotic family. Maturation of lantibiotics involves the enzymatic conversion of Thr, and Ser into dehydrated AA and the formation of thioether bonds with cysteine. This is followed by membrane translocation and cleavage of the modified precursor.

It localises to the secreted. Functionally, lanthionine-containing peptide antibiotic (lantibiotic) active on Gram-positive bacteria. The bactericidal activity of lantibiotics is based on depolarization of energized bacterial cytoplasmic membranes, initiated by the formation of aqueous transmembrane pores. Ruminococcin A is a broad spectrum bacteriocin exhibiting activity against a wide range of pathogenic clostridia and B.longum. This Blautia hansenii (Ruminococcus hansenii) protein is Ruminococcin-A (rumA1).